The following is a 253-amino-acid chain: Imidazole glycerol phosphate synthase subunit HisF (253 aa).

Active-site residues include D11 and D130.

The protein belongs to the HisA/HisF family. In terms of assembly, heterodimer of HisH and HisF.

It localises to the cytoplasm. The enzyme catalyses 5-[(5-phospho-1-deoxy-D-ribulos-1-ylimino)methylamino]-1-(5-phospho-beta-D-ribosyl)imidazole-4-carboxamide + L-glutamine = D-erythro-1-(imidazol-4-yl)glycerol 3-phosphate + 5-amino-1-(5-phospho-beta-D-ribosyl)imidazole-4-carboxamide + L-glutamate + H(+). It participates in amino-acid biosynthesis; L-histidine biosynthesis; L-histidine from 5-phospho-alpha-D-ribose 1-diphosphate: step 5/9. Functionally, IGPS catalyzes the conversion of PRFAR and glutamine to IGP, AICAR and glutamate. The HisF subunit catalyzes the cyclization activity that produces IGP and AICAR from PRFAR using the ammonia provided by the HisH subunit. The polypeptide is Imidazole glycerol phosphate synthase subunit HisF (Acetivibrio thermocellus (strain ATCC 27405 / DSM 1237 / JCM 9322 / NBRC 103400 / NCIMB 10682 / NRRL B-4536 / VPI 7372) (Clostridium thermocellum)).